The primary structure comprises 231 residues: Large ribosomal subunit protein uL1 (231 aa).

It belongs to the universal ribosomal protein uL1 family. As to quaternary structure, part of the 50S ribosomal subunit.

Functionally, binds directly to 23S rRNA. The L1 stalk is quite mobile in the ribosome, and is involved in E site tRNA release. In terms of biological role, protein L1 is also a translational repressor protein, it controls the translation of the L11 operon by binding to its mRNA. This is Large ribosomal subunit protein uL1 from Staphylococcus carnosus (strain TM300).